Consider the following 339-residue polypeptide: Spore coat polysaccharide biosynthesis protein SpsG (339 aa).

A helical transmembrane segment spans residues 241–261 (IVAGGISLYEAICIGVPCLVL).

To M.jannaschii MJ1062.

Its subcellular location is the cell membrane. It participates in spore coat biogenesis; spore coat polysaccharide biosynthesis. The protein is Spore coat polysaccharide biosynthesis protein SpsG (spsG) of Bacillus subtilis (strain 168).